A 760-amino-acid chain; its full sequence is U-box domain-containing protein 3 (760 aa).

The stretch at L146–V217 forms a coiled coil. One can recognise a U-box domain in the interval S237–N311. Residues I424–M434 show a composition bias toward polar residues. The disordered stretch occupies residues I424–H448. ARM repeat units lie at residues I504–I543, E545–V584, Q586–I626, H628–A666, and G668–L707.

It catalyses the reaction S-ubiquitinyl-[E2 ubiquitin-conjugating enzyme]-L-cysteine + [acceptor protein]-L-lysine = [E2 ubiquitin-conjugating enzyme]-L-cysteine + N(6)-ubiquitinyl-[acceptor protein]-L-lysine.. It participates in protein modification; protein ubiquitination. Functionally, functions as an E3 ubiquitin ligase. The protein is U-box domain-containing protein 3 (PUB3) of Arabidopsis thaliana (Mouse-ear cress).